The primary structure comprises 312 residues: uncharacterized protein (312 aa).

Positions 1–28 are cleaved as a signal peptide; the sequence is MNSADTQEPKSFNHTDMWTAFGTTMSGA.

Its function is as follows. The FAS-operon encodes genes involved in cytokinin production and in host plant fasciation (leafy gall). This is an uncharacterized protein from Rhodococcoides fascians (Rhodococcus fascians).